Reading from the N-terminus, the 342-residue chain is Protein-glutamate methylesterase/protein-glutamine glutaminase 3 (342 aa).

In terms of domain architecture, Response regulatory spans Arg-3–Arg-120. Asp-54 carries the 4-aspartylphosphate modification. In terms of domain architecture, CheB-type methylesterase spans Asp-152–Arg-342. Residues Ser-164, His-191, and Asp-285 contribute to the active site.

The protein belongs to the CheB family. Phosphorylated by CheA. Phosphorylation of the N-terminal regulatory domain activates the methylesterase activity.

It localises to the cytoplasm. The catalysed reaction is [protein]-L-glutamate 5-O-methyl ester + H2O = L-glutamyl-[protein] + methanol + H(+). The enzyme catalyses L-glutaminyl-[protein] + H2O = L-glutamyl-[protein] + NH4(+). Its function is as follows. Involved in chemotaxis. Part of a chemotaxis signal transduction system that modulates chemotaxis in response to various stimuli. Catalyzes the demethylation of specific methylglutamate residues introduced into the chemoreceptors (methyl-accepting chemotaxis proteins or MCP) by CheR. Also mediates the irreversible deamidation of specific glutamine residues to glutamic acid. This is Protein-glutamate methylesterase/protein-glutamine glutaminase 3 from Anaeromyxobacter dehalogenans (strain 2CP-C).